The sequence spans 193 residues: Putative manganese efflux pump MntP (193 aa).

6 consecutive transmembrane segments (helical) span residues 8–28, 37–57, 61–81, 109–129, 138–158, and 172–192; these read LLAI…GIIL, LVMA…GWMF, FSHL…AFLG, MAIA…LLGI, PILI…YFGI, and LWGG…HLFL.

This sequence belongs to the MntP (TC 9.B.29) family.

It is found in the cell inner membrane. In terms of biological role, probably functions as a manganese efflux pump. This Bacteroides thetaiotaomicron (strain ATCC 29148 / DSM 2079 / JCM 5827 / CCUG 10774 / NCTC 10582 / VPI-5482 / E50) protein is Putative manganese efflux pump MntP.